A 357-amino-acid polypeptide reads, in one-letter code: F-box only protein 25 (357 aa).

An interaction with beta-actin region spans residues 1–83 (MPFLGQDWRS…DTAAHSFYRE (83 aa)). The 49-residue stretch at 225-273 (LTLSDLPLHMLNNILYRFSDGWDIVTLGQVTPTLYMLSEDRRLWKRLCQ) folds into the F-box domain.

In terms of assembly, part of a SCF (SKP1-cullin-F-box) protein ligase complex consisting of FBXO25, SKP1, CUL1 and RBX1. Interacts directly with SKP1 and CUL1. Interacts (via C-terminus) with beta-actin (via N-terminus). In terms of tissue distribution, expressed in all tissues tested, except striated muscle (at protein level). Expressed predominantly in the cerebral cortex, the hippocampus and the Purkinje cell layer of the brain. Intestine and kidney show also significant levels.

It localises to the nucleus. The protein operates within protein modification; protein ubiquitination. Functionally, substrate-recognition component of the SCF (SKP1-CUL1-F-box protein)-type E3 ubiquitin ligase complex. May play a role in accumulation of expanded polyglutamine (polyQ) protein huntingtin (HTT). This chain is F-box only protein 25 (Fbxo25), found in Mus musculus (Mouse).